Here is a 967-residue protein sequence, read N- to C-terminus: MPFTLGQRWISDTESELGLGTVVAVNTRMITLLFPASGENRLYSRSDAPITRVMFNPGDTVTSHEGWQLKIDDVREEKGLLVYCGQRLDDETPAELREVFLDSKLTFNKPQDRLFAGQIDRMDRFALRYRARKHQNEQALQQWGGLRGMRASLIPHQLHIAYEVGQRHAPRVLLADEVGLGKTIEAGMIIHQQLLAGRASRVLIVVPETLQHQWLVEMLRRFNLLFSLFDDERYAEAKLDSSNPFETEQLVICSLGFVQRSAQRFAQLVNTDWDLLVVDEAHHLVWSEESPSPEYQAIEALARATPAVLLLTATPEQLGQQSHFARLRLLDPNRFHDYQEFVAEQQQYRPVADAVTLLLAGEKAQAAELNVLSDLLGEQDIEPLLKSINSDSDDNQKARQELITMLMDRHGTSRVLFRNTRQGVKGFPQRVLHQIRLPLPAQYQTAIKVSGIMNANKPLETRARDMLYPEQIYQQLEGDDATWWNFDPRVEWLLNYLTTNRDEKVLVICAQAATALQLEQVLRTREAIRAAVFHEGLSILERDRAAAYFASEEEGAQVLICSEIGSEGRNFQFASHLVMFDLPFNPDLLEQRIGRLDRIGQAKEIQVLVPYLENTAQALLVRWYHEGLDAFEHTCPTGRTIYDAHHAQLIERLTTVGEQQGLDEFIHTCRQQHDSLKQQLEQGRDRLLEMHSNGGEQAQLLAQAIAEQDNDVNLVTFALNLFDIVGINQEDRSDNLIILTPSDHMLVPDFPGLPQDGCTITFDRDQALSREDAQFISWEHPLIRNGLDLVLSGDTGSCAVSLLKNKALPVGTLLAELVYVVEAQAPKHLQLTRFLPPTPVRLLMDRKGTNLAAQVEFESFNRQLNAVNRHTSSKLVNAVQSDVHAMLQQAEALVETQARQLITEAQQQADLQLRRELERLEALKAVNPNIREDELTALENQREQVLSNLHEANWRLDAIRLVVVTHQ.

The 171-residue stretch at 163 to 333 (EVGQRHAPRV…FARLRLLDPN (171 aa)) folds into the Helicase ATP-binding domain. Residue 176–183 (DEVGLGKT) participates in ATP binding. The DEAH box signature appears at 279-282 (DEAH). Residues 489 to 677 (RVEWLLNYLT…TCRQQHDSLK (189 aa)) form the Helicase C-terminal domain.

This sequence belongs to the SNF2/RAD54 helicase family. RapA subfamily. As to quaternary structure, interacts with the RNAP. Has a higher affinity for the core RNAP than for the holoenzyme. Its ATPase activity is stimulated by binding to RNAP.

Functionally, transcription regulator that activates transcription by stimulating RNA polymerase (RNAP) recycling in case of stress conditions such as supercoiled DNA or high salt concentrations. Probably acts by releasing the RNAP, when it is trapped or immobilized on tightly supercoiled DNA. Does not activate transcription on linear DNA. Probably not involved in DNA repair. The chain is RNA polymerase-associated protein RapA from Pectobacterium atrosepticum (strain SCRI 1043 / ATCC BAA-672) (Erwinia carotovora subsp. atroseptica).